A 91-amino-acid chain; its full sequence is Small ribosomal subunit protein bS16 (91 aa).

Belongs to the bacterial ribosomal protein bS16 family.

In Enterococcus faecalis (strain ATCC 700802 / V583), this protein is Small ribosomal subunit protein bS16.